The sequence spans 142 residues: Transcriptional regulator MraZ (142 aa).

2 SpoVT-AbrB domains span residues 5-51 (ASSL…PRPE) and 77-120 (AMDV…DKAT).

This sequence belongs to the MraZ family. In terms of assembly, forms oligomers.

It localises to the cytoplasm. Its subcellular location is the nucleoid. The polypeptide is Transcriptional regulator MraZ (Acidovorax ebreus (strain TPSY) (Diaphorobacter sp. (strain TPSY))).